Consider the following 183-residue polypeptide: Endoribonuclease YbeY (183 aa).

Positions 143, 147, and 153 each coordinate Zn(2+).

Belongs to the endoribonuclease YbeY family. Zn(2+) is required as a cofactor.

It localises to the cytoplasm. Single strand-specific metallo-endoribonuclease involved in late-stage 70S ribosome quality control and in maturation of the 3' terminus of the 16S rRNA. In Rickettsia bellii (strain OSU 85-389), this protein is Endoribonuclease YbeY.